The primary structure comprises 910 residues: E3 ubiquitin-protein ligase MARCHF6 (910 aa).

An N-acetylmethionine modification is found at Met-1. An RING-CH-type zinc finger spans residues 1-62 (MDTAEEDICR…ELCKHRFAFT (62 aa)). Over 1-91 (MDTAEEDICR…LVTSIGTAIR (91 aa)) the chain is Cytoplasmic. Zn(2+) is bound by residues Cys-9, Cys-12, Cys-26, Cys-28, His-36, Cys-39, Cys-52, and Cys-55. A helical transmembrane segment spans residues 92–112 (YWFHYTLVAFAWLGVVPLTAC). Residues 113-142 (RIYKCLFTGSVSSLLTLPLDMLSTENLLAD) lie on the Extracellular side of the membrane. A helical transmembrane segment spans residues 143-163 (CLQGCFVVTCTLCAFISLVWL). Residues 164-283 (REQIVHGGAP…WERMLGLDGS (120 aa)) are Cytoplasmic-facing. Positions 185–256 (AAGHHQNEAP…AADANNGAQD (72 aa)) are disordered. The span at 223–248 (DAQDDQAEEEEEDNEEEDDAGVEDAA) shows a compositional bias: acidic residues. The chain crosses the membrane as a helical span at residues 284–304 (LVFLEHVFWVVSLNTLFILVF). Residues 305 to 336 (AFCPYHIGHFSLVGLGFEEHVQASHFEGLITT) lie on the Extracellular side of the membrane. Residues 337-357 (IVGYILLAITLIICHGLATLV) traverse the membrane as a helical segment. Topologically, residues 358–376 (KFHRSRRLLGVCYIVVKVS) are cytoplasmic. The helical transmembrane segment at 377 to 397 (LLVVVEIGVFPLICGWWLDIC) threads the bilayer. The Extracellular segment spans residues 398–421 (SLEMFDATLKDRELSFQSAPGTTM). The chain crosses the membrane as a helical span at residues 422–442 (FLHWLVGMVYVFYFASFILLL). Over 443–480 (REVLRPGVLWFLRNLNDPDFNPVQEMIHLPIYRHLRRF) the chain is Cytoplasmic. The helical transmembrane segment at 481–501 (ILSVIVFGSIVLLMLWLPIRI) threads the bilayer. At 502-519 (IKSVLPNFLPYNVMLYSD) the chain is on the extracellular side. Residues 520–540 (APVSELSLELLLLQVVLPALL) form a helical membrane-spanning segment. Over 541–632 (EQGHTRQWLK…YRRPLNFPLR (92 aa)) the chain is Cytoplasmic. A helical transmembrane segment spans residues 633 to 653 (IFLLIVFMCITLLIASLICLT). The Extracellular segment spans residues 654 to 678 (LPVFAGRWLMSFWTGTAKIHELYTA). Residues 679–699 (ACGLYVCWLTIRAVTVMVAWM) traverse the membrane as a helical segment. Topologically, residues 700-721 (PQGRRVIFQKVKEWSLMIMKTL) are cytoplasmic. The chain crosses the membrane as a helical span at residues 722-742 (IVAVLLAGVVPLLLGLLFELV). Residues 743-764 (IVAPLRVPLDQTPLFYPWQDWA) lie on the Extracellular side of the membrane. A helical membrane pass occupies residues 765-785 (LGVLHAKIIAAITLMGPQWWL). Residues 786-815 (KTVIEQVYANGIRNIDLHYIVRKLAAPVIS) are Cytoplasmic-facing. The chain crosses the membrane as a helical span at residues 816 to 836 (VLLLSLCVPYVIASGVVPLLG). The Extracellular segment spans residues 837 to 848 (VTAEMQNLVHRR). The helical transmembrane segment at 849–869 (IYPFLLMVVVLMAILSFQVRQ) threads the bilayer. Over 870–910 (FKRLYEHIKNDKYLVGQRLVNYERKSGKQGSSPPPPQSSQE) the chain is Cytoplasmic.

Interacts with DIO2. Interacts with SQLE. Auto-ubiquitinated, which results in proteasomal degradation. Deubiquitinated by USP19; protecting MARCHF6 from p97-mediated proteasomal degradation. Present in brain (at protein level).

The protein localises to the endoplasmic reticulum membrane. The catalysed reaction is S-ubiquitinyl-[E2 ubiquitin-conjugating enzyme]-L-cysteine + [acceptor protein]-L-lysine = [E2 ubiquitin-conjugating enzyme]-L-cysteine + N(6)-ubiquitinyl-[acceptor protein]-L-lysine.. It functions in the pathway protein modification; protein ubiquitination. Functionally, endoplasmic reticulum membrane-associated E3 ubiquitin ligase that plays a critical role in mitigating endoplasmic reticulum stress, the regulation of cholesterol and lipid homeostasis, and ferroptosis. Acts as a pivotal component of both the Ac/N-degron pathway (targeting the N-terminal acetyl group of substrates) and the ER-associated protein degradation-cytosol (ERAD-C) pathway (targeting misfolded substrates). For instance, mediates the degradation of Ac/N-degron-bearing proteins such as the G-protein regulator RGS2 and the lipid droplet protein PLIN2. Suppresses endoplasmic reticulum stress and ferroptosis through cytosolic POMC degradation. Prevents ferroptosis by acting as a NADPH sensor during lipid peroxidation through its C-terminal regulatory region. Facilitates also the degradation of selected endoplasmic reticulum proteins by associating with signal peptide peptidase for the turnover of endogenous tail-anchored proteins. Promotes ubiquitination of DIO2, leading to its degradation. By ubiquitinating and thereby modulating the stability of many proteins of the cholesterol pathway including SQLE, CYP51A1, CYP11A1 and HMGCR, acts as a crucial post-translational regulator of cholesterol synthesis. This chain is E3 ubiquitin-protein ligase MARCHF6, found in Homo sapiens (Human).